The chain runs to 792 residues: Phenylalanine--tRNA ligase beta subunit (792 aa).

The tRNA-binding domain occupies 38-148; sequence NTKLAGFIVA…DDYKVGNKFF (111 aa). The region spanning 406–482 is the B5 domain; it reads EADTKVSFDY…RIYGYDKIKE (77 aa). 4 residues coordinate Mg(2+): aspartate 460, aspartate 466, glutamate 469, and glutamate 470. The 93-residue stretch at 698–790 folds into the FDX-ACB domain; sequence YKHQSVKRDF…VHKNTGGILR (93 aa).

The protein belongs to the phenylalanyl-tRNA synthetase beta subunit family. Type 1 subfamily. Tetramer of two alpha and two beta subunits. Mg(2+) serves as cofactor.

It localises to the cytoplasm. It carries out the reaction tRNA(Phe) + L-phenylalanine + ATP = L-phenylalanyl-tRNA(Phe) + AMP + diphosphate + H(+). This is Phenylalanine--tRNA ligase beta subunit from Wolbachia sp. subsp. Brugia malayi (strain TRS).